The chain runs to 425 residues: Interferon regulatory factor 8 (425 aa).

The IRF tryptophan pentad repeat DNA-binding region spans 7 to 114 (GRRLRQWLIE…EPYKVYRIVP (108 aa)).

Belongs to the IRF family.

It localises to the nucleus. The protein localises to the cytoplasm. Its function is as follows. Plays a role as a transcriptional activator or repressor. Specifically binds to the upstream regulatory region of type I IFN and IFN-inducible MHC class I genes (the interferon consensus sequence (ICS)). Plays a regulatory role in cells of the immune system. The polypeptide is Interferon regulatory factor 8 (IRF8) (Gallus gallus (Chicken)).